The primary structure comprises 505 residues: Glucan endo-1,3-beta-glucosidase 4 (505 aa).

The signal sequence occupies residues 1–23; that stretch reads MLLPRWFAEALLLLLSILACSNA. 2 N-linked (GlcNAc...) asparagine glycosylation sites follow: Asn-70 and Asn-110. The active-site Proton donor is Glu-119. Residues Asn-178 and Asn-256 are each glycosylated (N-linked (GlcNAc...) asparagine). The Nucleophile role is filled by Glu-266. 3 N-linked (GlcNAc...) asparagine glycosylation sites follow: Asn-298, Asn-338, and Asn-357. The cysteines at positions 363 and 426 are disulfide-linked. Asn-453 is a glycosylation site (N-linked (GlcNAc...) asparagine). Ala-474 carries GPI-anchor amidated alanine lipidation. Residues 475–505 constitute a propeptide, removed in mature form; sequence NARIIFSYHLPILAPLALTLLQLLLQHDRLL.

The protein belongs to the glycosyl hydrolase 17 family. Post-translationally, contains two additional disulfide bonds.

It localises to the cell membrane. It catalyses the reaction Hydrolysis of (1-&gt;3)-beta-D-glucosidic linkages in (1-&gt;3)-beta-D-glucans.. This chain is Glucan endo-1,3-beta-glucosidase 4, found in Arabidopsis thaliana (Mouse-ear cress).